A 440-amino-acid chain; its full sequence is Argininosuccinate lyase (440 aa).

The protein belongs to the lyase 1 family. Argininosuccinate lyase subfamily.

Its subcellular location is the cytoplasm. The enzyme catalyses 2-(N(omega)-L-arginino)succinate = fumarate + L-arginine. Its pathway is amino-acid biosynthesis; L-arginine biosynthesis; L-arginine from L-ornithine and carbamoyl phosphate: step 3/3. The protein is Argininosuccinate lyase of Clostridium botulinum (strain Langeland / NCTC 10281 / Type F).